The sequence spans 642 residues: Glutamyl-tRNA(Gln) amidotransferase subunit E (642 aa).

It belongs to the GatB/GatE family. GatE subfamily. In terms of assembly, heterodimer of GatD and GatE.

The enzyme catalyses L-glutamyl-tRNA(Gln) + L-glutamine + ATP + H2O = L-glutaminyl-tRNA(Gln) + L-glutamate + ADP + phosphate + H(+). In terms of biological role, allows the formation of correctly charged Gln-tRNA(Gln) through the transamidation of misacylated Glu-tRNA(Gln) in organisms which lack glutaminyl-tRNA synthetase. The reaction takes place in the presence of glutamine and ATP through an activated gamma-phospho-Glu-tRNA(Gln). The GatDE system is specific for glutamate and does not act on aspartate. The sequence is that of Glutamyl-tRNA(Gln) amidotransferase subunit E from Aeropyrum pernix (strain ATCC 700893 / DSM 11879 / JCM 9820 / NBRC 100138 / K1).